The sequence spans 215 residues: uncharacterized protein (215 aa).

It to T.pallidum TP_0127, TP_0618 and TP_0619.

This is an uncharacterized protein from Treponema pallidum (strain Nichols).